Consider the following 441-residue polypeptide: Xaa-Pro dipeptidase (441 aa).

Positions 244, 255, 336, 381, and 420 each coordinate Mn(2+).

It belongs to the peptidase M24B family. Bacterial-type prolidase subfamily. Requires Mn(2+) as cofactor.

The enzyme catalyses Xaa-L-Pro dipeptide + H2O = an L-alpha-amino acid + L-proline. Its function is as follows. Splits dipeptides with a prolyl residue in the C-terminal position. The protein is Xaa-Pro dipeptidase of Xanthomonas campestris pv. campestris (strain B100).